Reading from the N-terminus, the 106-residue chain is MVNVPKTRQTFCKKYDKHQPHKVTQYKKGKDSLYALGKRRYDRKQSGYGGHTKPIFWKKAKTTKKIVLRLECVEPNCRSERMLATKRCKHFELGGDKTRKGQVIQF.

The protein belongs to the eukaryotic ribosomal protein eL42 family. Component of the large ribosomal subunit.

The protein localises to the cytoplasm. In terms of biological role, component of the large ribosomal subunit. The ribosome is a large ribonucleoprotein complex responsible for the synthesis of proteins in the cell. In Papio anubis (Olive baboon), this protein is Large ribosomal subunit protein eL42 (RPL36A).